A 363-amino-acid polypeptide reads, in one-letter code: UDP-N-acetylglucosamine--N-acetylmuramyl-(pentapeptide) pyrophosphoryl-undecaprenol N-acetylglucosamine transferase (363 aa).

UDP-N-acetyl-alpha-D-glucosamine-binding positions include 12–14 (TAG), Arg-166, Ser-196, and Gln-291.

Belongs to the glycosyltransferase 28 family. MurG subfamily.

It localises to the cell inner membrane. The catalysed reaction is di-trans,octa-cis-undecaprenyl diphospho-N-acetyl-alpha-D-muramoyl-L-alanyl-D-glutamyl-meso-2,6-diaminopimeloyl-D-alanyl-D-alanine + UDP-N-acetyl-alpha-D-glucosamine = di-trans,octa-cis-undecaprenyl diphospho-[N-acetyl-alpha-D-glucosaminyl-(1-&gt;4)]-N-acetyl-alpha-D-muramoyl-L-alanyl-D-glutamyl-meso-2,6-diaminopimeloyl-D-alanyl-D-alanine + UDP + H(+). It participates in cell wall biogenesis; peptidoglycan biosynthesis. Cell wall formation. Catalyzes the transfer of a GlcNAc subunit on undecaprenyl-pyrophosphoryl-MurNAc-pentapeptide (lipid intermediate I) to form undecaprenyl-pyrophosphoryl-MurNAc-(pentapeptide)GlcNAc (lipid intermediate II). In Legionella pneumophila (strain Paris), this protein is UDP-N-acetylglucosamine--N-acetylmuramyl-(pentapeptide) pyrophosphoryl-undecaprenol N-acetylglucosamine transferase.